The primary structure comprises 100 residues: Cytochrome b (100 aa).

3 helical membrane passes run 1 to 21 (MGSLLGLCLIVQIITGLFLAM), 45 to 66 (WLIRNFHANGASLFFICIYLHI), and 81 to 100 (WNIGVILLLLTMMTAFVGYV). Positions 51 and 65 each coordinate heme b.

Belongs to the cytochrome b family. In terms of assembly, the cytochrome bc1 complex contains 3 respiratory subunits (MT-CYB, CYC1 and UQCRFS1), 2 core proteins (UQCRC1 and UQCRC2) and probably 6 low-molecular weight proteins. Heme b serves as cofactor.

The protein localises to the mitochondrion inner membrane. Its function is as follows. Component of the ubiquinol-cytochrome c reductase complex (complex III or cytochrome b-c1 complex) that is part of the mitochondrial respiratory chain. The b-c1 complex mediates electron transfer from ubiquinol to cytochrome c. Contributes to the generation of a proton gradient across the mitochondrial membrane that is then used for ATP synthesis. This Polypterus sp. (Bichir) protein is Cytochrome b (mt-cyb).